A 540-amino-acid polypeptide reads, in one-letter code: Solute carrier family 22 member 7 (540 aa).

Transmembrane regions (helical) follow at residues 21-41, 144-164, 172-192, 202-222, 232-252, 257-277, 344-364, 378-398, 402-422, 429-449, 462-484, and 488-510; these read LVLL…PIFM, VTST…GYLS, LLLV…ASVN, LTGS…LEWL, VIST…GYLI, WLLL…WWVP, VSLC…GLTL, LLFG…VRLV, LTEA…LLVS, ITAL…TAYL, TGMG…VVLL, and WLLL…VLLL.

It belongs to the major facilitator (TC 2.A.1) superfamily. Organic cation transporter (TC 2.A.1.19) family. Abundant expression in male and female kidney. In kidney, expressed at the brush border of the proximal tubule S3 segment (S3) in the outer stripe and medullary rays. In kidney, expression is higher in female than male. Also expressed in female liver.

The protein localises to the basolateral cell membrane. The protein resides in the apical cell membrane. It is found in the cell membrane. It catalyses the reaction orotate(out) + L-glutamate(in) = orotate(in) + L-glutamate(out). The enzyme catalyses 3',5'-cyclic GMP(in) = 3',5'-cyclic GMP(out). The catalysed reaction is GMP(in) = GMP(out). It carries out the reaction 2'-deoxyguanosine(in) = 2'-deoxyguanosine(out). It catalyses the reaction GDP(in) = GDP(out). The enzyme catalyses guanosine(in) = guanosine(out). The catalysed reaction is GTP(in) = GTP(out). It carries out the reaction 3',5'-cyclic AMP(in) = 3',5'-cyclic AMP(out). It catalyses the reaction creatinine(in) = creatinine(out). The enzyme catalyses prostaglandin E2(out) = prostaglandin E2(in). The catalysed reaction is 2-oxoglutarate(in) = 2-oxoglutarate(out). It carries out the reaction glutarate(in) = glutarate(out). It catalyses the reaction urate(out) = urate(in). The enzyme catalyses estrone 3-sulfate(out) = estrone 3-sulfate(in). Its function is as follows. Functions as a Na(+)-independent bidirectional multispecific transporter. Contributes to the renal and hepatic elimination of endogenous organic compounds from the systemic circulation into the urine and bile, respectively. Capable of transporting a wide range of purine and pyrimidine nucleobases, nucleosides, and nucleotides with cGMP, 2'deoxyguanosine and GMP being the preferred substrates. Functions as a pH- and chloride-independent cGMP bidirectional facilitative transporter that can regulate both intracellular and extracellular levels of cGMP and may be involved in cGMP signaling pathways. Mediates orotate/glutamate bidirectional exchange and most likely display a physiological role in hepatic release of glutamate into the blood. Involved in renal secretion and possible reabsorption of creatinine. Able to uptake prostaglandin E2 (PGE2) and may contribute to PGE2 renal excretion. Also transports alpha-ketoglutarate and urate. Unlike human hortolog, able to transport glutarate. Apart from the orotate/glutamate exchange, the counterions for the uptake of other SLC22A7/OAT2 substrates remain to be identified. The protein is Solute carrier family 22 member 7 of Mus musculus (Mouse).